A 1072-amino-acid polypeptide reads, in one-letter code: Carbamoyl phosphate synthase large chain (1072 aa).

Residues 1–401 (MPKRLDINTI…SLLKAVRSLE (401 aa)) are carboxyphosphate synthetic domain. ATP contacts are provided by arginine 129, arginine 169, glycine 175, glycine 176, lysine 208, isoleucine 210, glutamate 215, glycine 241, valine 242, histidine 243, glutamine 284, and glutamate 298. The ATP-grasp 1 domain maps to 133-327 (RTLMQELNEP…IAKLAAKIAV (195 aa)). Positions 284, 298, and 300 each coordinate Mg(2+). Residues glutamine 284, glutamate 298, and asparagine 300 each contribute to the Mn(2+) site. An oligomerization domain region spans residues 402–546 (LGIYHLELNH…YSTYGDENES (145 aa)). The interval 547-929 (IVTERKSVMV…ALYKGLVAAG (383 aa)) is carbamoyl phosphate synthetic domain. In terms of domain architecture, ATP-grasp 2 spans 671–861 (EAALTELGIP…MANIATKVIL (191 aa)). ATP contacts are provided by arginine 707, arginine 746, glutamate 752, glycine 777, valine 778, histidine 779, serine 780, glutamine 820, and glutamate 832. Mg(2+) is bound by residues glutamine 820, glutamate 832, and asparagine 834. Glutamine 820, glutamate 832, and asparagine 834 together coordinate Mn(2+). The 143-residue stretch at 930 to 1072 (ISIPTHGSVI…PTTRHEVVHA (143 aa)) folds into the MGS-like domain. The segment at 930–1072 (ISIPTHGSVI…PTTRHEVVHA (143 aa)) is allosteric domain.

This sequence belongs to the CarB family. In terms of assembly, composed of two chains; the small (or glutamine) chain promotes the hydrolysis of glutamine to ammonia, which is used by the large (or ammonia) chain to synthesize carbamoyl phosphate. Tetramer of heterodimers (alpha,beta)4. The cofactor is Mg(2+). Mn(2+) serves as cofactor.

It carries out the reaction hydrogencarbonate + L-glutamine + 2 ATP + H2O = carbamoyl phosphate + L-glutamate + 2 ADP + phosphate + 2 H(+). The catalysed reaction is hydrogencarbonate + NH4(+) + 2 ATP = carbamoyl phosphate + 2 ADP + phosphate + 2 H(+). It functions in the pathway amino-acid biosynthesis; L-arginine biosynthesis; carbamoyl phosphate from bicarbonate: step 1/1. Its pathway is pyrimidine metabolism; UMP biosynthesis via de novo pathway; (S)-dihydroorotate from bicarbonate: step 1/3. Its function is as follows. Large subunit of the glutamine-dependent carbamoyl phosphate synthetase (CPSase). CPSase catalyzes the formation of carbamoyl phosphate from the ammonia moiety of glutamine, carbonate, and phosphate donated by ATP, constituting the first step of 2 biosynthetic pathways, one leading to arginine and/or urea and the other to pyrimidine nucleotides. The large subunit (synthetase) binds the substrates ammonia (free or transferred from glutamine from the small subunit), hydrogencarbonate and ATP and carries out an ATP-coupled ligase reaction, activating hydrogencarbonate by forming carboxy phosphate which reacts with ammonia to form carbamoyl phosphate. This Bacillus cytotoxicus (strain DSM 22905 / CIP 110041 / 391-98 / NVH 391-98) protein is Carbamoyl phosphate synthase large chain.